A 165-amino-acid chain; its full sequence is Selenoprotein F (165 aa).

A signal peptide spans 1 to 31; sequence MVAMAAGPSGCLVPAFGLRLLLATVLQAVSA. Position 96 (selenocysteine 96) is a non-standard amino acid, selenocysteine.

As to quaternary structure, forms a tight complex with UGGT1/UGCGL1. Interacts with UGGT2/UGCGL2. Interacts with RDH11. In terms of processing, the N-terminus is blocked. In terms of tissue distribution, higher levels in prostate and thyroid gland.

The protein localises to the endoplasmic reticulum lumen. Its function is as follows. May be involved in redox reactions associated with the formation of disulfide bonds. May contribute to the quality control of protein folding in the endoplasmic reticulum. May regulate protein folding by enhancing the catalytic activity of UGGT1/UGCGL1 and UGGT2/UGCGL2. In Homo sapiens (Human), this protein is Selenoprotein F.